A 136-amino-acid chain; its full sequence is Magnetite biomineralization protein Mms6 (136 aa).

Residues 1–85 (MGEMEREGAT…AVGGTIWSGK (85 aa)) lie on the Cytoplasmic side of the membrane. The segment at 86-95 (GLALGLGMGL) is GL repeat. A helical membrane pass occupies residues 86 to 106 (GLALGLGMGLGAWGPLILGVV). Residues 107 to 136 (GAGAVYAYMKSRDIEAAQSDEEVELRDALS) are Lumenal-facing. The MIC, self-assembles, binds magnetite, Fe(2+) and Fe(3+) stretch occupies residues 115 to 136 (MKSRDIEAAQSDEEVELRDALS).

This sequence belongs to the magnetosome Mms6 family. Full length protein oligomerizes and interacts with MamA. May undergo cleavage.

The protein resides in the magnetosome membrane. In terms of biological role, promotes the formation of magnetite in Fe(2+)-rich conditions, when magnetite is not readily formed. Binds both Fe(2+) and Fe(3+). May help control the production of crystals with a specific morphology. May function with MamX, MamY amd MamZ in biomineralization. The 4 genes of this operon collectively influence magnetosome size and number. The protein is Magnetite biomineralization protein Mms6 of Magnetospirillum gryphiswaldense (strain DSM 6361 / JCM 21280 / NBRC 15271 / MSR-1).